A 197-amino-acid polypeptide reads, in one-letter code: Imidazoleglycerol-phosphate dehydratase (197 aa).

Belongs to the imidazoleglycerol-phosphate dehydratase family.

It localises to the cytoplasm. It carries out the reaction D-erythro-1-(imidazol-4-yl)glycerol 3-phosphate = 3-(imidazol-4-yl)-2-oxopropyl phosphate + H2O. It participates in amino-acid biosynthesis; L-histidine biosynthesis; L-histidine from 5-phospho-alpha-D-ribose 1-diphosphate: step 6/9. This Chromobacterium violaceum (strain ATCC 12472 / DSM 30191 / JCM 1249 / CCUG 213 / NBRC 12614 / NCIMB 9131 / NCTC 9757 / MK) protein is Imidazoleglycerol-phosphate dehydratase.